A 289-amino-acid chain; its full sequence is Oxaloacetate decarboxylase (289 aa).

Ser-50 provides a ligand contact to substrate. Asp-88 lines the Mg(2+) pocket. 2 residues coordinate substrate: Arg-159 and His-235.

This sequence belongs to the isocitrate lyase/PEP mutase superfamily. Oxaloacetate decarboxylase family. In terms of assembly, homotetramer; dimer of dimers. Mg(2+) is required as a cofactor.

It carries out the reaction oxaloacetate + H(+) = pyruvate + CO2. Catalyzes the decarboxylation of oxaloacetate into pyruvate. Seems to play a role in maintaining cellular concentrations of bicarbonate and pyruvate. The chain is Oxaloacetate decarboxylase from Pseudomonas syringae pv. tomato (strain ATCC BAA-871 / DC3000).